A 367-amino-acid polypeptide reads, in one-letter code: Dual specificity protein phosphatase 1 (367 aa).

Residues 20–137 form the Rhodanese domain; the sequence is GAAQCLLLDC…FSASCPELCS (118 aa). The Tyrosine-protein phosphatase domain occupies 173-314; it reads GPVEILSFLY…LLQFESQVLA (142 aa). C258 serves as the catalytic Phosphocysteine intermediate. 2 positions are modified to phosphoserine; by MAPK1 and MAPK3: S359 and S364.

The protein belongs to the protein-tyrosine phosphatase family. Non-receptor class dual specificity subfamily. Phosphorylation at Ser-359 and Ser-364 by MAPK1/ERK2 and MAPK3/ERK1 reduces its rate of degradation. Post-translationally, 'Lys-48'-linked polyubiquitinated by NEURL3, leading to proteasomal degradation.

The protein localises to the nucleus. The catalysed reaction is O-phospho-L-tyrosyl-[protein] + H2O = L-tyrosyl-[protein] + phosphate. It catalyses the reaction O-phospho-L-seryl-[protein] + H2O = L-seryl-[protein] + phosphate. The enzyme catalyses O-phospho-L-threonyl-[protein] + H2O = L-threonyl-[protein] + phosphate. Its function is as follows. Dual specificity phosphatase that dephosphorylates MAP kinase MAPK1/ERK2 on both 'Thr-183' and 'Tyr-185', regulating its activity during the meiotic cell cycle. In Mus musculus (Mouse), this protein is Dual specificity protein phosphatase 1.